Consider the following 340-residue polypeptide: Phosphoribosylformylglycinamidine cyclo-ligase (340 aa).

The protein belongs to the AIR synthase family.

It localises to the cytoplasm. It catalyses the reaction 2-formamido-N(1)-(5-O-phospho-beta-D-ribosyl)acetamidine + ATP = 5-amino-1-(5-phospho-beta-D-ribosyl)imidazole + ADP + phosphate + H(+). The protein operates within purine metabolism; IMP biosynthesis via de novo pathway; 5-amino-1-(5-phospho-D-ribosyl)imidazole from N(2)-formyl-N(1)-(5-phospho-D-ribosyl)glycinamide: step 2/2. This chain is Phosphoribosylformylglycinamidine cyclo-ligase, found in Streptococcus agalactiae serotype V (strain ATCC BAA-611 / 2603 V/R).